The primary structure comprises 400 residues: Elongation factor Tu (400 aa).

A tr-type G domain is found at 10-209 (KPHVNIGTIG…EVDKYIPTPE (200 aa)). The G1 stretch occupies residues 19 to 26 (GHVDHGKT). A GTP-binding site is contributed by 19–26 (GHVDHGKT). Thr-26 contacts Mg(2+). Residues 60–64 (GITIN) are G2. The G3 stretch occupies residues 81-84 (DCPG). GTP is bound by residues 81–85 (DCPGH) and 136–139 (NKAD). The tract at residues 136–139 (NKAD) is G4. The tract at residues 174–176 (SGL) is G5.

Belongs to the TRAFAC class translation factor GTPase superfamily. Classic translation factor GTPase family. EF-Tu/EF-1A subfamily. Monomer.

Its subcellular location is the cytoplasm. It carries out the reaction GTP + H2O = GDP + phosphate + H(+). Its function is as follows. GTP hydrolase that promotes the GTP-dependent binding of aminoacyl-tRNA to the A-site of ribosomes during protein biosynthesis. The protein is Elongation factor Tu of Heliobacterium modesticaldum (strain ATCC 51547 / Ice1).